The sequence spans 171 residues: 3-hydroxydecanoyl-[acyl-carrier-protein] dehydratase (171 aa).

Residue H71 is part of the active site.

The protein belongs to the thioester dehydratase family. FabA subfamily. As to quaternary structure, homodimer.

It localises to the cytoplasm. It catalyses the reaction a (3R)-hydroxyacyl-[ACP] = a (2E)-enoyl-[ACP] + H2O. It carries out the reaction (3R)-hydroxydecanoyl-[ACP] = (2E)-decenoyl-[ACP] + H2O. The catalysed reaction is (2E)-decenoyl-[ACP] = (3Z)-decenoyl-[ACP]. It functions in the pathway lipid metabolism; fatty acid biosynthesis. In terms of biological role, necessary for the introduction of cis unsaturation into fatty acids. Catalyzes the dehydration of (3R)-3-hydroxydecanoyl-ACP to E-(2)-decenoyl-ACP and then its isomerization to Z-(3)-decenoyl-ACP. Can catalyze the dehydratase reaction for beta-hydroxyacyl-ACPs with saturated chain lengths up to 16:0, being most active on intermediate chain length. This Sinorhizobium fredii (strain NBRC 101917 / NGR234) protein is 3-hydroxydecanoyl-[acyl-carrier-protein] dehydratase.